Consider the following 480-residue polypeptide: G-rich sequence factor 1 (480 aa).

Residues 1 to 117 (MAGTRWVLGA…AAAAVPTRSY (117 aa)) constitute a mitochondrion transit peptide. RRM domains are found at residues 122-246 (KTTY…SSPV) and 250-326 (GVVR…PSRR). S244 bears the Phosphoserine mark. At S335 the chain carries Phosphoserine. One can recognise an RRM 3 domain in the interval 401-480 (HFVHMRGLPF…LFLNSCPKGK (80 aa)).

In terms of assembly, monomer. Found in a complex with DDX28, DHX30, FASTKD2 and FASTKD5. Interacts with the mitochondrial RNase P complex subunit TRMT10C/MRPP1. Interacts with the 2 components of the mitochondrial degradosome complex, PNPT1 and SUPV3L1, in an RNA-dependent manner.

Its subcellular location is the mitochondrion matrix. The protein localises to the cytoplasm. Regulator of post-transcriptional mitochondrial gene expression, required for assembly of the mitochondrial ribosome and for recruitment of mRNA and lncRNA. Binds RNAs containing the 14 base G-rich element. Preferentially binds RNAs transcribed from three contiguous genes on the light strand of mtDNA, the ND6 mRNA, and the long non-coding RNAs for MT-CYB and MT-ND5, each of which contains multiple consensus binding sequences. Involved in the degradosome-mediated decay of non-coding mitochondrial transcripts (MT-ncRNA) and tRNA-like molecules. Acts by unwinding G-quadruplex RNA structures in MT-ncRNA, thus facilitating their degradation by the degradosome. G-quadruplexes (G4) are non-canonical 4 stranded structures formed by transcripts from the light strand of mtDNA. This is G-rich sequence factor 1 (GRSF1) from Homo sapiens (Human).